We begin with the raw amino-acid sequence, 580 residues long: 2-succinyl-5-enolpyruvyl-6-hydroxy-3-cyclohexene-1-carboxylate synthase (580 aa).

This sequence belongs to the TPP enzyme family. MenD subfamily. In terms of assembly, homodimer. Mg(2+) is required as a cofactor. Mn(2+) serves as cofactor. It depends on thiamine diphosphate as a cofactor.

It catalyses the reaction isochorismate + 2-oxoglutarate + H(+) = 5-enolpyruvoyl-6-hydroxy-2-succinyl-cyclohex-3-ene-1-carboxylate + CO2. The protein operates within quinol/quinone metabolism; 1,4-dihydroxy-2-naphthoate biosynthesis; 1,4-dihydroxy-2-naphthoate from chorismate: step 2/7. It participates in quinol/quinone metabolism; menaquinone biosynthesis. Its function is as follows. Catalyzes the thiamine diphosphate-dependent decarboxylation of 2-oxoglutarate and the subsequent addition of the resulting succinic semialdehyde-thiamine pyrophosphate anion to isochorismate to yield 2-succinyl-5-enolpyruvyl-6-hydroxy-3-cyclohexene-1-carboxylate (SEPHCHC). The polypeptide is 2-succinyl-5-enolpyruvyl-6-hydroxy-3-cyclohexene-1-carboxylate synthase (Listeria welshimeri serovar 6b (strain ATCC 35897 / DSM 20650 / CCUG 15529 / CIP 8149 / NCTC 11857 / SLCC 5334 / V8)).